The primary structure comprises 360 residues: NADH-quinone oxidoreductase subunit H (360 aa).

8 consecutive transmembrane segments (helical) span residues 20-40 (GMVW…IPLM), 95-115 (GLFV…WVVI), 130-150 (LLLV…AGWA), 176-196 (FCLL…IVLA), 206-226 (GIGF…VYLI), 261-281 (IFFL…ALMF), 297-317 (IPGW…FIWI), and 336-356 (IFIP…LSPW).

It belongs to the complex I subunit 1 family. NDH-1 is composed of 14 different subunits. Subunits NuoA, H, J, K, L, M, N constitute the membrane sector of the complex.

The protein localises to the cell inner membrane. It carries out the reaction a quinone + NADH + 5 H(+)(in) = a quinol + NAD(+) + 4 H(+)(out). In terms of biological role, NDH-1 shuttles electrons from NADH, via FMN and iron-sulfur (Fe-S) centers, to quinones in the respiratory chain. The immediate electron acceptor for the enzyme in this species is believed to be ubiquinone. Couples the redox reaction to proton translocation (for every two electrons transferred, four hydrogen ions are translocated across the cytoplasmic membrane), and thus conserves the redox energy in a proton gradient. This subunit may bind ubiquinone. The chain is NADH-quinone oxidoreductase subunit H from Verminephrobacter eiseniae (strain EF01-2).